The sequence spans 442 residues: Transforming growth factor beta-2 proprotein (442 aa).

The first 20 residues, 1 to 20 (MHYCVLRTFLLLHLVPVALS), serve as a signal peptide directing secretion. Asparagine 72, asparagine 168, and asparagine 269 each carry an N-linked (GlcNAc...) asparagine glycan. Intrachain disulfides connect cysteine 337/cysteine 346, cysteine 345/cysteine 408, cysteine 374/cysteine 439, and cysteine 378/cysteine 441.

Belongs to the TGF-beta family. Interacts with the serine proteases, HTRA1 and HTRA3. Interacts with ASPN. Interacts with MFAP5. As to quaternary structure, interacts with Transforming growth factor beta-2 (TGF-beta-2) chain; interaction is non-covalent and maintains (TGF-beta-2) in a latent state. Interacts with LRRC32/GARP; leading to regulate activation of TGF-beta-2. Interacts with NREP; the interaction results in a decrease in TGFB2 autoinduction. In terms of assembly, transforming growth factor beta-2: Homodimer; disulfide-linked. Transforming growth factor beta-2: Interacts with TGF-beta receptors (TGFBR1 and TGFBR2), leading to signal transduction. In terms of processing, the precursor proprotein is cleaved in the Golgi apparatus to form Transforming growth factor beta-2 (TGF-beta-2) and Latency-associated peptide (LAP) chains, which remain non-covalently linked, rendering TGF-beta-2 inactive. Expressed in cardiomyocytes. As to expression, expressed in the aorta, primary bronchus, uterus, heart, skeletal muscle, sciatic nerve and spinal cord but not in the intestine.

The protein resides in the secreted. It is found in the extracellular space. The protein localises to the extracellular matrix. In terms of biological role, precursor of the Latency-associated peptide (LAP) and Transforming growth factor beta-2 (TGF-beta-2) chains, which constitute the regulatory and active subunit of TGF-beta-2, respectively. Functionally, required to maintain the Transforming growth factor beta-2 (TGF-beta-2) chain in a latent state during storage in extracellular matrix. Associates non-covalently with TGF-beta-2 and regulates its activation via interaction with 'milieu molecules', such as LTBP1 and LRRC32/GARP, that control activation of TGF-beta-2. Its function is as follows. Multifunctional protein that regulates various processes such as angiogenesis and heart development. Activation into mature form follows different steps: following cleavage of the proprotein in the Golgi apparatus, Latency-associated peptide (LAP) and Transforming growth factor beta-2 (TGF-beta-2) chains remain non-covalently linked rendering TGF-beta-2 inactive during storage in extracellular matrix. At the same time, LAP chain interacts with 'milieu molecules', such as LTBP1 and LRRC32/GARP, that control activation of TGF-beta-2 and maintain it in a latent state during storage in extracellular milieus. Once activated following release of LAP, TGF-beta-2 acts by binding to TGF-beta receptors (TGFBR1 and TGFBR2), which transduce signal. In Rattus norvegicus (Rat), this protein is Transforming growth factor beta-2 proprotein (Tgfb2).